Consider the following 114-residue polypeptide: MNVRANRVSEQMKKELGDILNRKIKDPRLGFVTVTGVDVTGDLQEAKVFISILGTDKEKENTLLALEKAHGFIRSEIGRRIRLRKVPEMSFEIDNSIAYGNRIDELLRDLNNDQ.

This sequence belongs to the RbfA family. In terms of assembly, monomer. Binds 30S ribosomal subunits, but not 50S ribosomal subunits or 70S ribosomes.

Its subcellular location is the cytoplasm. Functionally, one of several proteins that assist in the late maturation steps of the functional core of the 30S ribosomal subunit. Associates with free 30S ribosomal subunits (but not with 30S subunits that are part of 70S ribosomes or polysomes). Required for efficient processing of 16S rRNA. May interact with the 5'-terminal helix region of 16S rRNA. This Listeria innocua serovar 6a (strain ATCC BAA-680 / CLIP 11262) protein is Ribosome-binding factor A.